Consider the following 308-residue polypeptide: MQANIFPFYPQPRTPFKFDTKIIEIIIICIVTACTFIIILPGIRGKSRSIWLLRILTSLFIGAVILAVNFTSDWEMGTITATTVYKSFSHSMLNASIGLWIGLKGLNITLIGNPEYQLNETINYNEEFAWESANQFETSYKDALERGLPFPIVYVAEKFTISSDCGLFQQYCISTYYSSGIMWIAFCSWILYNVLFSMPVILYGIYMMFVTAICMLVSLISFASVRKAPVCNIQFGNSILKTHFGVSYWLSLITGLLCLIISLVLLFLYKTQPKVLQLIFSYGEEEDLSNKSENEEEHSSVLSLNEIL.

Residues 1–21 (MQANIFPFYPQPRTPFKFDTK) lie on the Extracellular side of the membrane. The chain crosses the membrane as a helical span at residues 22-42 (IIEIIIICIVTACTFIIILPG). Over 43-49 (IRGKSRS) the chain is Cytoplasmic. The helical transmembrane segment at 50-70 (IWLLRILTSLFIGAVILAVNF) threads the bilayer. Topologically, residues 71 to 91 (TSDWEMGTITATTVYKSFSHS) are extracellular. Residues 92–112 (MLNASIGLWIGLKGLNITLIG) form a helical membrane-spanning segment. Residues 113–175 (NPEYQLNETI…GLFQQYCIST (63 aa)) are Cytoplasmic-facing. A helical membrane pass occupies residues 176–198 (YYSSGIMWIAFCSWILYNVLFSM). Residue proline 199 is a topological domain, extracellular. The helical transmembrane segment at 200-220 (VILYGIYMMFVTAICMLVSLI) threads the bilayer. Over 221–247 (SFASVRKAPVCNIQFGNSILKTHFGVS) the chain is Cytoplasmic. A helical membrane pass occupies residues 248–268 (YWLSLITGLLCLIISLVLLFL). Residues 269–308 (YKTQPKVLQLIFSYGEEEDLSNKSENEEEHSSVLSLNEIL) lie on the Extracellular side of the membrane. Asparagine 290 carries N-linked (GlcNAc...) asparagine glycosylation.

It belongs to the DUOXA family.

The protein resides in the membrane. Possible role in maturation and transport from the endoplasmic reticulum to the plasma membrane of functional dual oxidase. The polypeptide is Dual oxidase maturation factor 1 (duoxa1) (Xenopus laevis (African clawed frog)).